A 483-amino-acid chain; its full sequence is tRNA-2-methylthio-N(6)-dimethylallyladenosine synthase (483 aa).

Residues 31 to 148 (KKLYIETQGC…LPQMLDQHHA (118 aa)) form the MTTase N-terminal domain. 6 residues coordinate [4Fe-4S] cluster: C40, C77, C111, C192, C196, and C199. In terms of domain architecture, Radical SAM core spans 178 to 410 (RVEGFKAFVS…QQVIKQSSIE (233 aa)). A TRAM domain is found at 413 to 477 (DAMLGKIERV…LNLVYGELLN (65 aa)).

It belongs to the methylthiotransferase family. MiaB subfamily. In terms of assembly, monomer. The cofactor is [4Fe-4S] cluster.

The protein localises to the cytoplasm. The enzyme catalyses N(6)-dimethylallyladenosine(37) in tRNA + (sulfur carrier)-SH + AH2 + 2 S-adenosyl-L-methionine = 2-methylsulfanyl-N(6)-dimethylallyladenosine(37) in tRNA + (sulfur carrier)-H + 5'-deoxyadenosine + L-methionine + A + S-adenosyl-L-homocysteine + 2 H(+). Functionally, catalyzes the methylthiolation of N6-(dimethylallyl)adenosine (i(6)A), leading to the formation of 2-methylthio-N6-(dimethylallyl)adenosine (ms(2)i(6)A) at position 37 in tRNAs that read codons beginning with uridine. The chain is tRNA-2-methylthio-N(6)-dimethylallyladenosine synthase from Acinetobacter baumannii (strain ACICU).